The chain runs to 868 residues: Leucine--tRNA ligase (868 aa).

Residues 42–52 (PYPSGKLHMGH) carry the 'HIGH' region motif. The short motif at 627–631 (KMAKS) is the 'KMSKS' region element. Lys630 contacts ATP.

This sequence belongs to the class-I aminoacyl-tRNA synthetase family.

It localises to the cytoplasm. The enzyme catalyses tRNA(Leu) + L-leucine + ATP = L-leucyl-tRNA(Leu) + AMP + diphosphate. This Pseudomonas fluorescens (strain ATCC BAA-477 / NRRL B-23932 / Pf-5) protein is Leucine--tRNA ligase.